A 338-amino-acid chain; its full sequence is Glycerol-3-phosphate dehydrogenase [NAD(P)+] (338 aa).

Positions 13, 14, and 108 each coordinate NADPH. Sn-glycerol 3-phosphate-binding residues include lysine 108, glycine 139, and serine 141. An NADPH-binding site is contributed by alanine 143. Residues lysine 194, aspartate 247, serine 257, arginine 258, and asparagine 259 each coordinate sn-glycerol 3-phosphate. Catalysis depends on lysine 194, which acts as the Proton acceptor. An NADPH-binding site is contributed by arginine 258. The NADPH site is built by valine 282 and glutamate 284.

The protein belongs to the NAD-dependent glycerol-3-phosphate dehydrogenase family.

It localises to the cytoplasm. The catalysed reaction is sn-glycerol 3-phosphate + NAD(+) = dihydroxyacetone phosphate + NADH + H(+). It carries out the reaction sn-glycerol 3-phosphate + NADP(+) = dihydroxyacetone phosphate + NADPH + H(+). The protein operates within membrane lipid metabolism; glycerophospholipid metabolism. Catalyzes the reduction of the glycolytic intermediate dihydroxyacetone phosphate (DHAP) to sn-glycerol 3-phosphate (G3P), the key precursor for phospholipid synthesis. The protein is Glycerol-3-phosphate dehydrogenase [NAD(P)+] of Listeria monocytogenes serotype 4a (strain HCC23).